Consider the following 591-residue polypeptide: Alpha-(1-&gt;6)-mannopyranosyltransferase Rv1459c (591 aa).

The next 13 membrane-spanning stretches (helical) occupy residues 40–60 (FGAT…ARPV), 80–100 (VSLT…LMLG), 117–137 (TLLL…KDVY), 201–221 (IVAA…LIVW), 235–255 (VSAL…VAGI), 259–279 (ALML…LDMA), 321–341 (EWGP…SSQV), 367–387 (LLLA…ILGW), 408–428 (WMSP…LLGL), 441–461 (AIGV…VLRG), 473–493 (LAVT…WAII), 502–522 (PGFR…GPTA), and 527–547 (FALF…ILLI). The disordered stretch occupies residues 569 to 591 (ESASKTPATRRPTAAPDAYADST). Residues 574–584 (TPATRRPTAAP) show a composition bias toward low complexity.

This sequence belongs to the MptA/B family.

It is found in the membrane. Its function is as follows. Catalyzes the addition of alpha-(1-&gt;6)-mannose residue. The chain is Alpha-(1-&gt;6)-mannopyranosyltransferase Rv1459c from Mycobacterium tuberculosis (strain ATCC 25618 / H37Rv).